The chain runs to 202 residues: dITP/XTP pyrophosphatase (202 aa).

A substrate-binding site is contributed by 9-14; the sequence is TGNKGK. The active-site Proton acceptor is the D73. A Mg(2+)-binding site is contributed by D73. Substrate contacts are provided by residues S74, 158 to 161, K181, and 186 to 187; these read FGYD and HR.

Belongs to the HAM1 NTPase family. As to quaternary structure, homodimer. It depends on Mg(2+) as a cofactor.

The catalysed reaction is XTP + H2O = XMP + diphosphate + H(+). It carries out the reaction dITP + H2O = dIMP + diphosphate + H(+). The enzyme catalyses ITP + H2O = IMP + diphosphate + H(+). Functionally, pyrophosphatase that catalyzes the hydrolysis of nucleoside triphosphates to their monophosphate derivatives, with a high preference for the non-canonical purine nucleotides XTP (xanthosine triphosphate), dITP (deoxyinosine triphosphate) and ITP. Seems to function as a house-cleaning enzyme that removes non-canonical purine nucleotides from the nucleotide pool, thus preventing their incorporation into DNA/RNA and avoiding chromosomal lesions. This Lactobacillus acidophilus (strain ATCC 700396 / NCK56 / N2 / NCFM) protein is dITP/XTP pyrophosphatase.